Reading from the N-terminus, the 172-residue chain is Type II secretion system protein H (172 aa).

Positions 1-6 (MRASRG) are cleaved as a propeptide — leader sequence. Residue Phe7 is modified to N-methylphenylalanine. Residues 7 to 27 (FTLIELMVVMVIISVLIGLAV) traverse the membrane as a helical segment.

The protein belongs to the GSP H family. Type II secretion is composed of four main components: the outer membrane complex, the inner membrane complex, the cytoplasmic secretion ATPase and the periplasm-spanning pseudopilus. Forms the tip of the type II pseudopilus by interacting with XcpV, XcpW and XcpX. Interacts with core component XcpT. In terms of processing, cleaved by prepilin peptidase. Post-translationally, methylated by prepilin peptidase at the amino group of the N-terminal phenylalanine once the leader sequence is cleaved by prepilin peptidase.

The protein localises to the cell inner membrane. Component of the type II secretion system required for the energy-dependent secretion of extracellular factors such as proteases and toxins from the periplasm. Part of the pseudopilus tip complex that is critical for the recognition and binding of secretion substrates. Type II pseudopilus confers increased bacterial adhesive capabilities. The protein is Type II secretion system protein H (xcpU) of Pseudomonas aeruginosa (strain ATCC 15692 / DSM 22644 / CIP 104116 / JCM 14847 / LMG 12228 / 1C / PRS 101 / PAO1).